Consider the following 156-residue polypeptide: Transcriptional repressor NrdR (156 aa).

The segment at 3 to 34 (CPKCNSTHSRVVDSRHADEANAIRRRRECENC) is a zinc-finger region. An ATP-cone domain is found at 49–139 (LIVVKKDGTR…VYKEFKDVDQ (91 aa)).

It belongs to the NrdR family. It depends on Zn(2+) as a cofactor.

Its function is as follows. Negatively regulates transcription of bacterial ribonucleotide reductase nrd genes and operons by binding to NrdR-boxes. This Staphylococcus epidermidis (strain ATCC 35984 / DSM 28319 / BCRC 17069 / CCUG 31568 / BM 3577 / RP62A) protein is Transcriptional repressor NrdR.